Reading from the N-terminus, the 119-residue chain is Single-stranded DNA-binding protein (119 aa).

The SSB domain maps to 3–102 (INIVTLVGRV…IRVDQLELLG (100 aa)).

Homotetramer.

In Anabaena variabilis, this protein is Single-stranded DNA-binding protein (ssb1).